Reading from the N-terminus, the 564-residue chain is Homeobox protein unc-62 (564 aa).

Disordered stretches follow at residues 40-59 (NEQFNDGYGPPPGSASADPA), 216-270 (ERAS…VMGG), 293-313 (SSSSNQAGDHPLANGGTLHST), 328-397 (PSTC…KVPK), and 455-503 (IDQN…PSSL). The MEIS N-terminal domain maps to 133–218 (SSDVCSSASF…PLDIVGDERA (86 aa)). Residues 219-230 (SSSQPPMSPGSM) show a composition bias toward low complexity. Polar residues-rich tracts occupy residues 328 to 344 (PSTCSSGGLRQDSTPLS) and 381 to 390 (LSDSANGSQN). A DNA-binding region (homeobox; TALE-type) is located at residues 392 to 454 (KRKVPKVFSK…NARRRIVQPM (63 aa)). 2 stretches are compositionally biased toward polar residues: residues 455 to 469 (IDQNNRAGRSGQMNV) and 494 to 503 (ANYSPDPSSL).

This sequence belongs to the TALE/MEIS homeobox family. In terms of assembly, forms a heterodimer with homeobox ceh-60.

It localises to the nucleus. Acts redundantly with ceh-20 and ceh-40 to perform overlapping roles during embryogenesis. Required for postembryonic development of the ectoderm, including the Q, V and P cell lineages, playing a crucial role in ensuring that these cells and their descendants undergo their invariant patterns of cell division, migration, fusion and morphogenesis. Has a role in the mig-13 pathway to promote anterior migration of neuroblasts in the Q lineage. Required for multiple roles in regulating vulva development. Associates with homeobox ceh-60 to regulate gene expression, including repression of genes involved in innate immunity and activation of genes involved in vitellogenesis. Involved in lipid homeostasis, contributing to the formation of the cuticle. This is Homeobox protein unc-62 (unc-62) from Caenorhabditis elegans.